The primary structure comprises 158 residues: Low molecular weight phosphotyrosine protein phosphatase (158 aa).

Ala-2 is modified (N-acetylalanine). Cys-13 serves as the catalytic Nucleophile. Residue Arg-19 is part of the active site. Asp-130 acts as the Proton donor in catalysis. 2 positions are modified to phosphotyrosine: Tyr-132 and Tyr-133.

It belongs to the low molecular weight phosphotyrosine protein phosphatase family. As to quaternary structure, interacts with EPHA2; dephosphorylates EPHA2. Interacts with EPHB1. Interacts with the SH3 domain of SPTAN1. Phosphorylated by LCK. Phosphorylation at Tyr-132 increases its phosphatase activity.

Its subcellular location is the cytoplasm. The catalysed reaction is O-phospho-L-tyrosyl-[protein] + H2O = L-tyrosyl-[protein] + phosphate. It carries out the reaction a phosphate monoester + H2O = an alcohol + phosphate. With respect to regulation, inhibited by sulfhydryl reagents. Acts on tyrosine phosphorylated proteins, low-MW aryl phosphates and natural and synthetic acyl phosphates with differences in substrate specificity between isoform 1 and isoform 2. This Sus scrofa (Pig) protein is Low molecular weight phosphotyrosine protein phosphatase (ACP1).